Consider the following 155-residue polypeptide: Rusticyanin (155 aa).

The 103-residue stretch at 53–155 (SFEVHDKKNP…TGMFGKIIVK (103 aa)) folds into the Plastocyanin-like domain. Cu cation-binding residues include His-85, Cys-138, His-143, and Met-148.

As to quaternary structure, monomer. Cu cation serves as cofactor.

The protein localises to the periplasm. In terms of biological role, electron carrier from cytochrome c552 to the A-type oxidase. The protein is Rusticyanin (rus) of Acidithiobacillus ferrooxidans (Thiobacillus ferrooxidans).